Here is a 272-residue protein sequence, read N- to C-terminus: Probable proteasome subunit beta type-5 (272 aa).

The propeptide at 1-61 (MNSIVSKYTQ…KHCLIKMNHG (61 aa)) is removed in mature form. The active-site Nucleophile is the Thr62.

Belongs to the peptidase T1B family. The 26S proteasome consists of a 20S proteasome core and two 19S regulatory subunits. The 20S proteasome core is composed of 28 subunits that are arranged in four stacked rings, resulting in a barrel-shaped structure. The two end rings are each formed by seven alpha subunits, and the two central rings are each formed by seven beta subunits. The catalytic chamber with the active sites is on the inside of the barrel.

It is found in the cytoplasm. The protein localises to the nucleus. The catalysed reaction is Cleavage of peptide bonds with very broad specificity.. Its function is as follows. The proteasome is a multicatalytic proteinase complex which is characterized by its ability to cleave peptides with Arg, Phe, Tyr, Leu, and Glu adjacent to the leaving group at neutral or slightly basic pH. The proteasome has an ATP-dependent proteolytic activity. This is Probable proteasome subunit beta type-5 (pts1) from Schizosaccharomyces pombe (strain 972 / ATCC 24843) (Fission yeast).